The primary structure comprises 2555 residues: Squalestatin hexaketide synthase clz14 (2555 aa).

The disordered stretch occupies residues 1-84 (MDVSKEAGHH…PNATSTTTTT (84 aa)). Residues 10 to 84 (HANGFANGNT…PNATSTTTTT (75 aa)) show a composition bias toward low complexity. The Ketosynthase family 3 (KS3) domain maps to 91–511 (QVPVAICGIG…GSNTHIIIDS (421 aa)). Active-site for beta-ketoacyl synthase activity residues include Cys-261, His-398, and His-435. The segment at 611–928 (FIFTGQGAQW…LEGIGKLFCF (318 aa)) is malonyl-CoA:ACP transacylase (MAT) domain. The interval 975-1104 (HELLGERSLE…GLVTASVVTS (130 aa)) is N-terminal hotdog fold. The interval 975–1256 (HELLGERSLE…RGFKCKKTDD (282 aa)) is dehydratase (DH) domain. Residues 975–1260 (HELLGERSLE…CKKTDDAFIQ (286 aa)) form the PKS/mFAS DH domain. The Proton acceptor; for dehydratase activity role is filled by His-1007. A C-terminal hotdog fold region spans residues 1117 to 1260 (SRKVDTSRWY…CKKTDDAFIQ (144 aa)). Residue Asp-1177 is the Proton donor; for dehydratase activity of the active site. A methyltransferase (CMet) domain region spans residues 1424-1595 (SFFQAAGLNK…GFEGAGTVVL (172 aa)). Residues 1821–2141 (GMLNTLHWVG…RGVHMGRIVV (321 aa)) form an enoyl reductase (ER) (ER) domain region. Residues 2165 to 2338 (STYLLTGGMG…PASVIDIAAI (174 aa)) form a ketoreductase (KR) domain region. Residues 2468–2546 (IIFAQEIAKR…SLGRLATKRL (79 aa)) form the Carrier domain. At Ser-2505 the chain carries O-(pantetheine 4'-phosphoryl)serine.

It participates in secondary metabolite biosynthesis. In terms of biological role, highly reducing polyketide synthase (HR-PKS); part of the gene cluster that mediates the biosynthesis of squalestatin S1 (SQS1, also known as zaragozic acid A), a heavily oxidized fungal polyketide that offers potent cholesterol lowering activity by targeting squalene synthase (SS). SQS1 is composed of a 2,8-dioxobicyclic[3.2.1]octane-3,4,5-tricarboxyclic acid core that is connected to two lipophilic polyketide arms. These initial steps feature the priming of an unusual benzoic acid starter unit onto the highly reducing polyketide synthase clz14, followed by oxaloacetate extension and product release to generate a tricarboxylic acid containing product. The phenylalanine ammonia lyase (PAL) clz10 and the acyl-CoA ligase clz12 are involved in transforming phenylalanine into benzoyl-CoA. The citrate synthase-like protein clz17 is involved in connecting the C-alpha-carbons of the hexaketide chain and oxaloacetate to afford the tricarboxylic acid unit. The potential hydrolytic enzymes, clz11 and clz13, are in close proximity to pks2 and may participate in product release. On the other side, the tetraketide arm is synthesized by a the squalestatin tetraketide synthase clz2 and enzymatically esterified to the core in the last biosynthetic step, by the acetyltransferase clz6. The biosynthesis of the tetraketide must involve 3 rounds of chain extension. After the first and second rounds methyl-transfer occurs, and in all rounds of extension the ketoreductase and dehydratase are active. The enoyl reductase and C-MeT of clz2 are not active in the final round of extension. The acetyltransferase clz6 appears to have a broad substrate selectivity for its acyl CoA substrate, allowing the in vitro synthesis of novel squalestatins. The biosynthesis of SQS1 requires several oxidative steps likely performed by oxidoreductases clz3, clz15 and clz16. Finally, in support of the identification of the cluster as being responsible for SQS1 production, the cluster contains a gene encoding a putative squalene synthase (SS) clz20, suggesting a likely mechanism for self-resistance. The protein is Squalestatin hexaketide synthase clz14 of Cochliobolus lunatus (Filamentous fungus).